A 245-amino-acid chain; its full sequence is MPASMFSIDNILAARPRCKDSVLLPPSAPVVFPSLHGDSLYGAASDYGGFYSRAVAPGSALPAVGRSRLGYNNYYYGQLHVATSPVGPSCCGAVPPLGAQQCSCVPPAGYEGAGSVLMSPVPHQMLPYMNVGTLSRTELQLLNQLHCRRKRRHRTIFTDEQLEALENLFQETKYPDVGTREQLARKVHLREEKVEVWFKNRRAKWRRQKRSSSEESENAQKWNKASKTSPEKRQEDGKSDLDSDS.

Residues 150-209 constitute a DNA-binding region (homeobox); the sequence is KRRHRTIFTDEQLEALENLFQETKYPDVGTREQLARKVHLREEKVEVWFKNRRAKWRRQK. The interval 203–245 is disordered; it reads AKWRRQKRSSSEESENAQKWNKASKTSPEKRQEDGKSDLDSDS. Over residues 219–228 the composition is skewed to polar residues; that stretch reads AQKWNKASKT. A compositionally biased stretch (basic and acidic residues) spans 229 to 245; the sequence is SPEKRQEDGKSDLDSDS.

It belongs to the paired homeobox family. Bicoid subfamily.

It localises to the nucleus. Its function is as follows. Involved in the development of the organizer region in the gastrula (Hensen node in chicken). The protein is Homeobox protein goosecoid (GSC) of Gallus gallus (Chicken).